The chain runs to 307 residues: Regulating synaptic membrane exocytosis protein 3 (307 aa).

Residues 86–120 (STETGIAVEMRSRVTRQGSRESTDGSTNSNSSEGT) form a disordered region. The segment covering 109-119 (DGSTNSNSSEG) has biased composition (polar residues). The C2 domain occupies 155 to 273 (PMGDVHIAIM…DLSAAVTGWY (119 aa)). A phosphoserine mark is found at Ser-294 and Ser-297.

Binds PPFIA3. Does not bind RAB3.

The protein localises to the synapse. Functionally, regulates synaptic membrane exocytosis. This is Regulating synaptic membrane exocytosis protein 3 (Rims3) from Mus musculus (Mouse).